A 115-amino-acid polypeptide reads, in one-letter code: Protein Wnt-2 (115 aa).

Residue Ser1 is the site of O-palmitoleoyl serine; by PORCN attachment. An intrachain disulfide couples Cys81 to Cys96. An N-linked (GlcNAc...) asparagine glycan is attached at Asn82.

It belongs to the Wnt family. Post-translationally, palmitoleoylation is required for efficient binding to frizzled receptors. Depalmitoleoylation leads to Wnt signaling pathway inhibition.

It localises to the secreted. The protein localises to the extracellular space. Its subcellular location is the extracellular matrix. Ligand for members of the frizzled family of seven transmembrane receptors. Probable developmental protein. May be a signaling molecule which affects the development of discrete regions of tissues. Is likely to signal over only few cell diameters. The polypeptide is Protein Wnt-2 (WNT-2) (Strongylocentrotus purpuratus (Purple sea urchin)).